We begin with the raw amino-acid sequence, 509 residues long: MEEIQRYLQPDRSQQHNFLYPLIFQEYIYALAHDHGLNRNRSILLENPGYDNKFSFLIVKRLITRMYQQNHFLISTNDSNKNSFLGCNKSLYSQMISEGFAFIAEIPFSLRLMSSLSSFEGKNIFKSHNLRSIHSTFPFLEDNFSHLNYVLDILIPYPVHLEILVQTLRYWVKDASSLHLLRFFLHEYWNLNSLITSKKPGYSFSKKNQRFFFFLYNSYVYECESTFVFLRNQSSHLRSTSFGALLERIYFYGKIERLVEVFAKDFQVTLWLFKDPFMHYVRYQGKSIMASKGTFLLMNKWKFYLVNFWQCHFSLCFHTGRIHINQLSNHSRDFMGYLSSVRLNPSMVRSQMLENSFLINNAIKKFDILVPIIPLIGSLAKENFCTVLGHPISKPVWSDLSDSDIIDRFGRICRNLFHYYSGSSKKKTLYRIKYILRLSCARTLARKHKSTVRTFLKRSGSELLEEFLTSEEQVLSLTFPRASSSLWGVYRSRIWYLDIFCINDLANYQ.

It belongs to the intron maturase 2 family. MatK subfamily.

Its subcellular location is the plastid. The protein localises to the chloroplast. Usually encoded in the trnK tRNA gene intron. Probably assists in splicing its own and other chloroplast group II introns. This Anthocercis angustifolia (Narrow-leaf ray-flower) protein is Maturase K.